The chain runs to 145 residues: MKKILVLHGPNLNLLGSREPSIYGHASLTEINGDLIQEADNAGIRLSCFQSNAEAELIQAVHQAGIDKINYIIINPAAFTHTSIALRDALSAVAIPFIEVHLSNIFSRETFRHHSYFSDIAVGVISGLGTKGYLLALQAIIKELK.

Catalysis depends on tyrosine 23, which acts as the Proton acceptor. Asparagine 75, histidine 81, and aspartate 88 together coordinate substrate. Residue histidine 101 is the Proton donor of the active site. Substrate is bound by residues 102–103 (LS) and arginine 112.

Belongs to the type-II 3-dehydroquinase family. In terms of assembly, homododecamer.

The catalysed reaction is 3-dehydroquinate = 3-dehydroshikimate + H2O. It participates in metabolic intermediate biosynthesis; chorismate biosynthesis; chorismate from D-erythrose 4-phosphate and phosphoenolpyruvate: step 3/7. Functionally, catalyzes a trans-dehydration via an enolate intermediate. The chain is 3-dehydroquinate dehydratase from Legionella pneumophila (strain Paris).